A 1364-amino-acid chain; its full sequence is Toxin subunit YenA2 (1364 aa).

Positions 1025 to 1080 form a coiled coil; that stretch reads SESYRRRRQEWELQYKQAEWEVNSVEQQINLQNMQIKAANKRLEQVEAQQQQAMAL.

As to quaternary structure, semipurified toxin complex consists of at least YenA1-YenA2-YenB-YenC1-YenC2-Chi1-Chi2. The Yen-TC:K9 subcomplex is about 26 nm tall and 22 nm in diameter with 5-fold symmetry and 5 copies of YenA1, YenA2, Chi1 and Chi2; the chitinase subunits may be solvent accessible on the exterior the complex. The Yen-TC:K9 subcomplex has no insecticidal activity. The native complex with additional YenB, YenC1 and YenC2 subunits is 16 nm taller and is insecticidal; the toxicity-conferring subunits are present at about 1 copy each. Post-translationally, the isolated toxin complex includes 3 peptides starting between residues 768 and 778 of this protein, which might be physiologically relevant.

Its subcellular location is the secreted. Functionally, part of an orally active toxin complex (TC) with strong insecticidal effects on larvae of the Coleoptera Costelytra zealandica, Acrossidius tasmania and Adoryphorus couloni and some Lepidoptera larvae. The TC has an endochitinase activity. The polypeptide is Toxin subunit YenA2 (Yersinia entomophaga).